Reading from the N-terminus, the 300-residue chain is Sulfate adenylyltransferase subunit 2 (300 aa).

The tract at residues 281–300 is disordered; that stretch reads RAIDRDEAGSMEKKKREGYF.

It belongs to the PAPS reductase family. CysD subfamily. As to quaternary structure, heterodimer composed of CysD, the smaller subunit, and CysN.

It carries out the reaction sulfate + ATP + H(+) = adenosine 5'-phosphosulfate + diphosphate. It functions in the pathway sulfur metabolism; hydrogen sulfide biosynthesis; sulfite from sulfate: step 1/3. Its function is as follows. With CysN forms the ATP sulfurylase (ATPS) that catalyzes the adenylation of sulfate producing adenosine 5'-phosphosulfate (APS) and diphosphate, the first enzymatic step in sulfur assimilation pathway. APS synthesis involves the formation of a high-energy phosphoric-sulfuric acid anhydride bond driven by GTP hydrolysis by CysN coupled to ATP hydrolysis by CysD. In Brucella melitensis biotype 2 (strain ATCC 23457), this protein is Sulfate adenylyltransferase subunit 2.